We begin with the raw amino-acid sequence, 48 residues long: Lantibiotic salivaricin-A (48 aa).

Residues 1-26 (MKNSKDILNNAIEEVSEKELMEVAGG) constitute a propeptide that is removed on maturation. Cross-links (beta-methyllanthionine (Thr-Cys)) lie at residues 35–40 (TITDDC) and 37–47 (TDDCPNSVFVC). The lanthionine (Ser-Cys) cross-link spans 43–48 (SVFVCC).

Belongs to the type A lantibiotic family. Post-translationally, maturation of lantibiotics involves the enzymatic conversion of Thr, and Ser into dehydrated AA and the formation of thioether bonds with cysteine. This is followed by membrane translocation and cleavage of the modified precursor.

Lanthionine-containing peptide antibiotic (lantibiotic) active on Gram-positive bacteria. The bactericidal activity of lantibiotics is based on depolarization of energized bacterial cytoplasmic membranes, initiated by the formation of aqueous transmembrane pores. The protein is Lantibiotic salivaricin-A (salA) of Streptococcus salivarius.